The primary structure comprises 63 residues: Small ribosomal subunit protein eS31 (63 aa).

Positions 31, 34, 50, and 53 each coordinate Zn(2+). The C4-type zinc-finger motif lies at 31–53; that stretch reads CPRCGSIMAHHMKPVERWACGKC.

This sequence belongs to the eukaryotic ribosomal protein eS31 family. Part of the 30S ribosomal subunit. Requires Zn(2+) as cofactor.

The protein is Small ribosomal subunit protein eS31 of Sulfurisphaera tokodaii (strain DSM 16993 / JCM 10545 / NBRC 100140 / 7) (Sulfolobus tokodaii).